The primary structure comprises 237 residues: NADPH-dependent FMN reductase ArsH (237 aa).

FMN-binding positions include 39–46 and 102–107; these read SNRECSYS and SPERHG.

The protein belongs to the ArsH family. As to quaternary structure, homotetramer. It depends on FMN as a cofactor.

Functionally, has NADPH-dependent FMN reductase activity and high NADPH-dependent ferric reductase activity with highest activity for Fe(3+) as substrate. No activity with NADH, iron trichloride, Cu(2+) or Ag(+). May be involved in cytosolic ferric iron assimilation as an NADPH-dependent ferric reductase in vivo. This chain is NADPH-dependent FMN reductase ArsH, found in Acidithiobacillus ferrooxidans (strain ATCC 23270 / DSM 14882 / CIP 104768 / NCIMB 8455) (Ferrobacillus ferrooxidans (strain ATCC 23270)).